The following is a 411-amino-acid chain: Lissencephaly-1 homolog (411 aa).

The LisH domain occupies 9 to 41 (QREELNQAIADYLGSNGYGDSLETFRKEADVST). The stretch at 56–83 (TSVIRLQKKVMELEAKLTEAEKEVIEGA) forms a coiled coil. WD repeat units follow at residues 106 to 147 (GHRA…RSLK), 148 to 187 (GHTDSVQDVAFDSQGKLLASCSADLSIKLWDFQQSYECVK), 191 to 230 (GHDHNVSSVAFVPAGDYVLSASRDRTIKMWEVATGYCVKT), 233 to 272 (GHREWVRMVRVHIEGSIFATCSNDHTIRVWLMNSKDCKVE), 275 to 334 (DHEH…CLLT), 337 to 376 (GHDNWVRGLAFHPGGKYLVSASDDKTIRVWDLRNKRCMKT), and 379 to 411 (AHQHFCTSIDFHKAHPYVISGSVDQTVKVWECR).

The protein belongs to the WD repeat LIS1/nudF family.

Its subcellular location is the cytoplasm. It localises to the cytoskeleton. The protein resides in the microtubule organizing center. The protein localises to the centrosome. Its function is as follows. Positively regulates the activity of the minus-end directed microtubule motor protein dynein. May enhance dynein-mediated microtubule sliding by targeting dynein to the microtubule plus end. Required for several dynein- and microtubule-dependent processes. In Drosophila persimilis (Fruit fly), this protein is Lissencephaly-1 homolog.